The chain runs to 241 residues: Biosynthetic peptidoglycan transglycosylase (241 aa).

The helical transmembrane segment at 19 to 39 (AILAVLGVWIAGILLFSVMPV) threads the bilayer.

Belongs to the glycosyltransferase 51 family.

It localises to the cell inner membrane. The enzyme catalyses [GlcNAc-(1-&gt;4)-Mur2Ac(oyl-L-Ala-gamma-D-Glu-L-Lys-D-Ala-D-Ala)](n)-di-trans,octa-cis-undecaprenyl diphosphate + beta-D-GlcNAc-(1-&gt;4)-Mur2Ac(oyl-L-Ala-gamma-D-Glu-L-Lys-D-Ala-D-Ala)-di-trans,octa-cis-undecaprenyl diphosphate = [GlcNAc-(1-&gt;4)-Mur2Ac(oyl-L-Ala-gamma-D-Glu-L-Lys-D-Ala-D-Ala)](n+1)-di-trans,octa-cis-undecaprenyl diphosphate + di-trans,octa-cis-undecaprenyl diphosphate + H(+). Its pathway is cell wall biogenesis; peptidoglycan biosynthesis. Functionally, peptidoglycan polymerase that catalyzes glycan chain elongation from lipid-linked precursors. In Cronobacter sakazakii (strain ATCC BAA-894) (Enterobacter sakazakii), this protein is Biosynthetic peptidoglycan transglycosylase.